The primary structure comprises 1003 residues: Lon protease homolog 2, peroxisomal (1003 aa).

The region spanning 14–305 is the Lon N-terminal domain; it reads LPCFTLVDAP…LFSTCVQDFQ (292 aa). Residues 367–389 are disordered; the sequence is DVTSPNKFLKTSSSHDEDSDSND. The span at 368 to 377 shows a compositional bias: polar residues; sequence VTSPNKFLKT. 520–527 contributes to the ATP binding site; it reads GPPGVGKT. In terms of domain architecture, Lon proteolytic spans 773 to 969; that stretch reads SEKFGVVNGL…QPELQKLKDK (197 aa). Catalysis depends on residues S874 and K917.

Belongs to the peptidase S16 family.

The protein resides in the peroxisome matrix. The enzyme catalyses Hydrolysis of proteins in presence of ATP.. In terms of biological role, ATP-dependent serine protease that mediates the selective degradation of misfolded and unassembled polypeptides in the peroxisomal matrix. Necessary for type 2 peroxisome targeting signal (PTS2)-containing protein processing and facilitates peroxisome matrix protein import. This chain is Lon protease homolog 2, peroxisomal, found in Kluyveromyces lactis (strain ATCC 8585 / CBS 2359 / DSM 70799 / NBRC 1267 / NRRL Y-1140 / WM37) (Yeast).